Reading from the N-terminus, the 445-residue chain is Competence protein E (445 aa).

A signal peptide spans 1–23 (MKKYFLKCGYFLVCFCLPLIVFA).

Belongs to the bacterial secretin family. PilQ subfamily.

The protein resides in the cell outer membrane. Involved in transformation (genetic competence for DNA uptake). This is Competence protein E (comE) from Haemophilus influenzae (strain ATCC 51907 / DSM 11121 / KW20 / Rd).